The following is a 366-amino-acid chain: UDP-N-acetylglucosamine--N-acetylmuramyl-(pentapeptide) pyrophosphoryl-undecaprenol N-acetylglucosamine transferase (366 aa).

Residues 10–12, Asn124, Arg166, Ser196, and Gln297 each bind UDP-N-acetyl-alpha-D-glucosamine; that span reads TGG.

It belongs to the glycosyltransferase 28 family. MurG subfamily.

It is found in the cell membrane. The catalysed reaction is di-trans,octa-cis-undecaprenyl diphospho-N-acetyl-alpha-D-muramoyl-L-alanyl-D-glutamyl-meso-2,6-diaminopimeloyl-D-alanyl-D-alanine + UDP-N-acetyl-alpha-D-glucosamine = di-trans,octa-cis-undecaprenyl diphospho-[N-acetyl-alpha-D-glucosaminyl-(1-&gt;4)]-N-acetyl-alpha-D-muramoyl-L-alanyl-D-glutamyl-meso-2,6-diaminopimeloyl-D-alanyl-D-alanine + UDP + H(+). The protein operates within cell wall biogenesis; peptidoglycan biosynthesis. Its function is as follows. Cell wall formation. Catalyzes the transfer of a GlcNAc subunit on undecaprenyl-pyrophosphoryl-MurNAc-pentapeptide (lipid intermediate I) to form undecaprenyl-pyrophosphoryl-MurNAc-(pentapeptide)GlcNAc (lipid intermediate II). This chain is UDP-N-acetylglucosamine--N-acetylmuramyl-(pentapeptide) pyrophosphoryl-undecaprenol N-acetylglucosamine transferase, found in Alkaliphilus metalliredigens (strain QYMF).